Reading from the N-terminus, the 61-residue chain is Metallothionein-2A (61 aa).

Methionine 1 bears the N-acetylmethionine mark. Residues 1–29 (MDPNCSCAAGGSCTCAGSCKCKDCKCTSC) form a beta region. Residues cysteine 5, cysteine 7, cysteine 13, cysteine 15, cysteine 19, cysteine 21, cysteine 24, cysteine 26, cysteine 29, cysteine 33, cysteine 34, cysteine 36, cysteine 37, cysteine 41, cysteine 44, cysteine 48, cysteine 50, and cysteine 57 each contribute to the a divalent metal cation site. Residues 30-61 (KKSCCSCCPVGCAKCAQGCICKGASDKCSCCA) are alpha. Serine 58 bears the Phosphoserine mark. The a divalent metal cation site is built by cysteine 59 and cysteine 60.

It belongs to the metallothionein superfamily. Type 1 family. In terms of assembly, interacts with EOLA1.

Functionally, metallothioneins have a high content of cysteine residues that bind various heavy metals; these proteins are transcriptionally regulated by both heavy metals and glucocorticoids. The protein is Metallothionein-2A (MT2A) of Sus scrofa (Pig).